Here is a 400-residue protein sequence, read N- to C-terminus: Argininosuccinate synthase (400 aa).

10–18 lines the ATP pocket; it reads AFSGGLDTT. Tyr-87 contributes to the L-citrulline binding site. Gly-117 lines the ATP pocket. L-aspartate-binding residues include Thr-119, Asn-123, and Asp-124. Asn-123 is an L-citrulline binding site. 5 residues coordinate L-citrulline: Arg-127, Ser-173, Ser-182, Glu-255, and Tyr-267.

This sequence belongs to the argininosuccinate synthase family. Type 1 subfamily. As to quaternary structure, homotetramer.

The protein resides in the cytoplasm. The enzyme catalyses L-citrulline + L-aspartate + ATP = 2-(N(omega)-L-arginino)succinate + AMP + diphosphate + H(+). Its pathway is amino-acid biosynthesis; L-arginine biosynthesis; L-arginine from L-ornithine and carbamoyl phosphate: step 2/3. The chain is Argininosuccinate synthase from Natronomonas pharaonis (strain ATCC 35678 / DSM 2160 / CIP 103997 / JCM 8858 / NBRC 14720 / NCIMB 2260 / Gabara) (Halobacterium pharaonis).